The sequence spans 346 residues: Methylthioribose-1-phosphate isomerase (346 aa).

Residues 46–48 (RGA), Arg-89, and Gln-196 each bind substrate. Asp-237 functions as the Proton donor in the catalytic mechanism. 247 to 248 (NK) is a binding site for substrate.

Belongs to the eIF-2B alpha/beta/delta subunits family. MtnA subfamily.

The catalysed reaction is 5-(methylsulfanyl)-alpha-D-ribose 1-phosphate = 5-(methylsulfanyl)-D-ribulose 1-phosphate. It participates in amino-acid biosynthesis; L-methionine biosynthesis via salvage pathway; L-methionine from S-methyl-5-thio-alpha-D-ribose 1-phosphate: step 1/6. Catalyzes the interconversion of methylthioribose-1-phosphate (MTR-1-P) into methylthioribulose-1-phosphate (MTRu-1-P). The sequence is that of Methylthioribose-1-phosphate isomerase from Citrifermentans bemidjiense (strain ATCC BAA-1014 / DSM 16622 / JCM 12645 / Bem) (Geobacter bemidjiensis).